The chain runs to 456 residues: N(6)-adenosine-methyltransferase non-catalytic subunit METTL14 (456 aa).

The tract at residues 43-74 (EIAETRETSRASYDTSAAVSKRKLPEEGKADE) is disordered. Residues 65 to 74 (KLPEEGKADE) are compositionally biased toward basic and acidic residues. Interaction with METTL3 stretches follow at residues 135-136 (RD) and 237-238 (SG). Positions 245–254 (RMCLRKWGFR) are positively charged region required for RNA-binding. Interaction with METTL3 regions lie at residues 255 to 258 (RSED) and 278 to 287 (KAIFQRTKEH). Residues 297-298 (HR) form a positively charged region required for RNA-binding region. Residues 308-312 (NVDID) are interaction with METTL3. Positions 395-456 (LRPKTPPPKS…GPHRGVFAPR (62 aa)) are disordered. The segment covering 410-421 (ASRGGGRGGASA) has biased composition (gly residues). Over residues 423-441 (RGERGRERNRGSFRGDRGN) the composition is skewed to basic and acidic residues.

This sequence belongs to the MT-A70-like family. As to quaternary structure, heterodimer; heterodimerizes with mettl3 to form an antiparallel heterodimer that constitutes an active methyltransferase. Component of the WMM complex, a N6-methyltransferase complex composed of a catalytic subcomplex, named MAC, and of an associated subcomplex, named MACOM. The MAC subcomplex is composed of mettl3 and mettl14.

Its subcellular location is the nucleus. In terms of biological role, the METTL3-METTL14 heterodimer forms a N6-methyltransferase complex that methylates adenosine residues at the N(6) position of some mRNAs and regulates the circadian clock, differentiation of embryonic stem cells and cortical neurogenesis. In the heterodimer formed with mettl3, mettl14 constitutes the RNA-binding scaffold that recognizes the substrate rather than the catalytic core. N6-methyladenosine (m6A), which takes place at the 5'-[AG]GAC-3' consensus sites of some mRNAs, plays a role in mRNA stability and processing. The sequence is that of N(6)-adenosine-methyltransferase non-catalytic subunit METTL14 (mettl14) from Xenopus laevis (African clawed frog).